Consider the following 331-residue polypeptide: Ketol-acid reductoisomerase (NADP(+)) (331 aa).

One can recognise a KARI N-terminal Rossmann domain in the interval 2–181 (TKVYYEDAVK…GATRAGVIET (180 aa)). Residues 25 to 28 (YGSQ), Arg-48, Ser-52, and 82 to 85 (DETQ) each bind NADP(+). His-107 is an active-site residue. Gly-133 contacts NADP(+). One can recognise a KARI C-terminal knotted domain in the interval 182-327 (TFKEETETDL…AELREMMPFV (146 aa)). Residues Asp-190, Glu-194, Glu-226, and Glu-230 each coordinate Mg(2+). Ser-251 lines the substrate pocket.

It belongs to the ketol-acid reductoisomerase family. The cofactor is Mg(2+).

The enzyme catalyses (2R)-2,3-dihydroxy-3-methylbutanoate + NADP(+) = (2S)-2-acetolactate + NADPH + H(+). It catalyses the reaction (2R,3R)-2,3-dihydroxy-3-methylpentanoate + NADP(+) = (S)-2-ethyl-2-hydroxy-3-oxobutanoate + NADPH + H(+). The protein operates within amino-acid biosynthesis; L-isoleucine biosynthesis; L-isoleucine from 2-oxobutanoate: step 2/4. It participates in amino-acid biosynthesis; L-valine biosynthesis; L-valine from pyruvate: step 2/4. Functionally, involved in the biosynthesis of branched-chain amino acids (BCAA). Catalyzes an alkyl-migration followed by a ketol-acid reduction of (S)-2-acetolactate (S2AL) to yield (R)-2,3-dihydroxy-isovalerate. In the isomerase reaction, S2AL is rearranged via a Mg-dependent methyl migration to produce 3-hydroxy-3-methyl-2-ketobutyrate (HMKB). In the reductase reaction, this 2-ketoacid undergoes a metal-dependent reduction by NADPH to yield (R)-2,3-dihydroxy-isovalerate. This Listeria monocytogenes serovar 1/2a (strain ATCC BAA-679 / EGD-e) protein is Ketol-acid reductoisomerase (NADP(+)).